A 593-amino-acid chain; its full sequence is Protein GAMETE EXPRESSED 1 (593 aa).

An N-terminal signal peptide occupies residues 1 to 24 (MDRFSRKCLLFLLLIILLDSPLTC). Over 25-427 (HSWGWFSSSS…LHNAMLLESR (403 aa)) the chain is Extracellular. 2 coiled-coil regions span residues 156–194 (CQQL…SKSD) and 350–387 (EALQ…HDHL). Residues 428-448 (VIKAFVIYFLSIFVIYMFTST) traverse the membrane as a helical segment. Over 449–457 (KQTYIIRPR) the chain is Cytoplasmic. Residues 458 to 476 (LYIGLCVTLALEVASLRYV) form a helical membrane-spanning segment. Topologically, residues 477–485 (NDTERQAWM) are extracellular. A helical membrane pass occupies residues 486–506 (INLIRSLFALLASAQLLHAAL). Topologically, residues 507 to 593 (SYRDYEVLNH…TRRLYNFRPR (87 aa)) are cytoplasmic.

Homodimer. As to expression, in tricellular pollen, expressed in mature sperm cells. Not expressed in bicellular or unicellular pollen. Detected in ovules, roots and guard cells. Expressed in the embryo sac before cellularization, in the egg cell after cellularization, in the zygote/embryo immediately after fertilization and in the pollen vegetative cell.

Its subcellular location is the cell membrane. In terms of biological role, has a dual function during gametophyte development and early embryogenesis. Required for correct pollen maturation. The polypeptide is Protein GAMETE EXPRESSED 1 (GEX1) (Arabidopsis thaliana (Mouse-ear cress)).